The sequence spans 901 residues: Alpha-actinin-3 (901 aa).

Position 1 is an N-acetylmethionine (M1). The interval M1–H261 is actin-binding. 2 consecutive Calponin-homology (CH) domains span residues K45–A149 and T158–A264. Spectrin repeat units lie at residues K288–S398, H408–R513, R523–E634, and R644–N747. 2 EF-hand domains span residues E760–D795 and L796–E831. Residues D773, N777, M779, D784, D809, and N811 each coordinate Ca(2+).

The protein belongs to the alpha-actinin family. Homodimer; antiparallel. Also forms heterodimers with ACTN2. Interacts with MYOZ1. Expression restricted to fast (type 2) skeletal muscle fibers (at protein level).

In terms of biological role, F-actin cross-linking protein which is thought to anchor actin to a variety of intracellular structures. This is a bundling protein. The chain is Alpha-actinin-3 (ACTN3) from Homo sapiens (Human).